The chain runs to 341 residues: Cysteine and histidine-rich domain-containing protein 1 (341 aa).

Cysteine 5, cysteine 10, cysteine 24, histidine 27, cysteine 42, cysteine 43, cysteine 59, histidine 64, cysteine 155, cysteine 160, cysteine 174, histidine 177, cysteine 192, cysteine 193, cysteine 209, and histidine 214 together coordinate Zn(2+). 2 consecutive CHORD domains span residues 5 to 64 (CYNK…KGPH) and 155 to 214 (CKNG…RGKH). Residues 61–81 (KGPHNQEKPAEPVKPEVKSSL) are disordered. Over residues 64–81 (HNQEKPAEPVKPEVKSSL) the composition is skewed to basic and acidic residues. The 90-residue stretch at 225 to 314 (VVPCRFDWHQ…AEPMSWARLD (90 aa)) folds into the CS domain. The disordered stretch occupies residues 313–341 (LDLPPVAPPKEKEKEKDVDSEDECDDDED). A compositionally biased stretch (acidic residues) spans 330–341 (VDSEDECDDDED).

Its function is as follows. Regulates centrosome duplication. The protein is Cysteine and histidine-rich domain-containing protein 1 (chordc1) of Danio rerio (Zebrafish).